Here is a 458-residue protein sequence, read N- to C-terminus: Monomethylamine methyltransferase MtmB1 (458 aa).

A non-standard amino acid (pyrrolysine) is located at residue O202.

Belongs to the monomethylamine methyltransferase family. As to quaternary structure, dimer of homotrimers. Can form a complex with MtmC (MtmC1 or MtmC2).

It carries out the reaction Co(I)-[methylamine-specific corrinoid protein] + methylamine + H(+) = methyl-Co(III)-[methylamine-specific corrinoid protein] + NH4(+). Its pathway is one-carbon metabolism; methanogenesis from methylamine. Its function is as follows. Catalyzes the transfer of the methyl group from monomethylamine to the corrinoid cofactor of MtmC (MtmC1 or MtmC2). The chain is Monomethylamine methyltransferase MtmB1 (mtmB1) from Methanosarcina barkeri.